The sequence spans 7158 residues: Twitchin (7158 aa).

Ig-like domains follow at residues 5-97 and 111-204; these read PRFT…INLN and PSFV…LALN. Intrachain disulfides connect cysteine 25-cysteine 81 and cysteine 132-cysteine 188. Disordered stretches follow at residues 204 to 381, 473 to 639, 658 to 732, and 763 to 955; these read NFEE…PIVL, EEEL…TKLR, KKVK…DSMA, and EVKE…IDMR. Over residues 220-238 the composition is skewed to low complexity; sequence TASPRPSSRGPGSRPSSPK. Basic and acidic residues-rich tracts occupy residues 242–259 and 279–291; these read KSREGTPKRTLKPREGSP and ESRRSSRTDKMEV. Composition is skewed to low complexity over residues 319–340 and 347–368; these read SPSTRKSPSRKSASPTPSRKGS and SGTTGASASATSATSGGSASSD. The 90-residue stretch at 377-466 folds into the Ig-like 3 domain; the sequence is PPIVLEASRS…GEGQSSAMVK (90 aa). Residues 504–513 are compositionally biased toward basic residues; sequence RVARRSKSKS. Residues 514-523 are compositionally biased toward low complexity; the sequence is KSPAPQAKKS. Composition is skewed to basic and acidic residues over residues 529–540 and 601–618; these read GRQEASEVEHKR and KTDSPPKQDDMFSRDTLL. Low complexity predominate over residues 620 to 630; the sequence is KTTTSTKNESS. The stretch at 718-764 is one Kelch 1 repeat; that stretch reads VKSGAGGLEKSDSMASLKKLDLKKGKIDDNSDGAFKVQLKKVVKKEV. Composition is skewed to basic and acidic residues over residues 763-813, 837-850, 885-897, and 917-955; these read EVKE…DKPK, KEVEEKSTSEELKA, KAHDDTNELEGIK, and SESRRGSVFGELRRGSRAPRDSADNSRRDSIRRSSIDMR. Residues 980–1072 enclose the Ig-like 4 domain; that stretch reads PKIVEVPENV…DSADVKLLVT (93 aa). Positions 1088–1118 are disordered; the sequence is SQAGFQKDGEGGGAGGGGGEKKPMTEAERRQ. The span at 1106–1118 shows a compositional bias: basic and acidic residues; sequence GEKKPMTEAERRQ. Ig-like domains follow at residues 1122-1213, 1217-1306, and 1312-1398; these read PGKK…AQLT, PPMK…SKVQ, and PRHT…AQLI. A disulfide bridge links cysteine 1150 with cysteine 1201. Fibronectin type-III domains are found at residues 1598 to 1690, 1696 to 1791, 1891 to 1988, 1994 to 2087, 2189 to 2282, 2288 to 2383, 2483 to 2576, and 2579 to 2675; these read PKGP…AKNP, KPKN…MKAK, PPKG…IKDP, KPGR…AKPK, PNGP…AKNP, KTGT…AKPR, PLGP…AKNP, and VPGK…AKPR. Residues 2014 to 2058 form a Kelch 2 repeat; the sequence is PPHKDGGAPIEEYIVEVRDPDTKEWKEVKRVPDTNASISGLKEGK. The 96-residue stretch at 2086 to 2181 folds into the Ig-like 8 domain; sequence PKFIPAWLKH…GADEEKANLT (96 aa). One copy of the Kelch 3 repeat lies at 2207–2253; sequence WKPPDDDGGEPIEYYEVEKLDTATGRWVPCAKVKDTKAHIDGLKKGQ. The segment covering 2266 to 2287 has biased composition (basic and acidic residues); sequence GASDALSTDKDTKAKNPYDEPG. The segment at 2266–2295 is disordered; it reads GASDALSTDKDTKAKNPYDEPGKTGTPDVV. One copy of the Kelch 4 repeat lies at 2502–2547; sequence KVPEDDGGAPIDHYEIEKMDLATGRWVPCGRSETTKTTVPNLQPGH. Residues 2679–2763 form the Ig-like 9 domain; the sequence is PRIHREDLSD…TNINGTDSVT (85 aa). Fibronectin type-III domains follow at residues 2775–2868 and 2874–2968; these read PKGP…AKNP and RPGR…AKPR. The Kelch 5 repeat unit spans residues 2793-2839; it reads WKPPEDDGGEPIEFYEIEKMNTKDGIWVPCGRSGDTHFTVDSLNKGD. Residues 2849–2901 are disordered; sequence NSEGPSDPLETETDILAKNPFDRPDRPGRPEPTDWDSDHVDLKWDPPLSDGGA. A compositionally biased stretch (basic and acidic residues) spans 2868-2892; the sequence is PFDRPDRPGRPEPTDWDSDHVDLKW. An Ig-like 10 domain is found at 2972–3062; the sequence is PHIDRDALKN…GEDEATVKIN (91 aa). Fibronectin type-III domains lie at 3070–3165 and 3171–3265; these read PNGP…AKDP and KTNA…AKAR. The Kelch 6 repeat unit spans residues 3089-3134; that stretch reads RAPDDDGGIPIENYVIEKYDTASGRWVPAAKVAGDKTTAVVDGLIP. Positions 3268–3358 constitute an Ig-like 11 domain; that stretch reads PPVIDRNSIQ…GTDTAEVKVT (91 aa). Fibronectin type-III domains are found at residues 3365 to 3459 and 3465 to 3559; these read SPRG…AKDP and KPGT…AKPR. Residues 3384-3430 form a Kelch 7 repeat; it reads WKEPEDDGGAEISHYVIEKQDAATGRWTACGESKDTNFHVDDLTQGH. An Ig-like 12 domain is found at 3563 to 3653; sequence PKINRDMFVA…GKDEHEVDVN (91 aa). 6 consecutive Fibronectin type-III domains span residues 3661–3753, 3759–3853, 3954–4047, 4053–4146, 4246–4340, and 4346–4440; these read PEGP…AKNP, APTD…AKPR, PEGP…AKNQ, PVDK…TKAR, PEGP…AKDP, and KPGR…TAKP. Residues 3972-4018 form a Kelch 8 repeat; sequence WKPPTDNGGTDVLHYIVEKMDTSRGTWQEVGTFPDCTAKVNKLVPGK. 2 Kelch repeats span residues 4265 to 4310 and 4365 to 4410; these read KPPK…LTEG and DPPR…RVQK. In terms of domain architecture, Ig-like 13 spans 4445 to 4531; the sequence is PKFDLDLDGK…GEAEANIKIT (87 aa). Fibronectin type-III domains lie at 4538 to 4631, 4637 to 4733, 4739 to 4834, 4936 to 5028, 5034 to 5129, 5231 to 5326, 5333 to 5427, and 5430 to 5528; these read APEN…IKDP, APST…CRPY, APDA…IEEQ, PTGP…AKNP, APGQ…ADNA, SPQH…VAKY, QPEA…LKSR, and PPGP…IQES. Residues 4557–4602 form a Kelch 11 repeat; it reads DAPKDDGGAEIAGYKIEYQEVGSQIWDKVPGLISGTAYTVRGLEHG. Residues 5287-5335 form a Kelch 12 repeat; it reads LNYTVGGLIKDNRYRFRVRAETQYGVSEPCELADVVVAKYQFEVPNQPE. Residues 5533–5621 form the Ig-like 14 domain; sequence PQIVVKPEDT…GSDTATANLV (89 aa). 2 consecutive Fibronectin type-III domains span residues 5723–5817 and 5823–5919; these read PQGP…ARLP and SPLN…ASGS. The Kelch 13 repeat unit spans residues 5742-5787; sequence RPPVTDGGSKITSYVVEKRDLSKDEWVTVTSNVKDMNYIVTGLFEN. 2 Ig-like domains span residues 5923 to 6011 and 6016 to 6107; these read PKIV…ANLR and PRVF…VNVT. A disulfide bridge links cysteine 5944 with cysteine 5995. The 94-residue stretch at 6114–6207 folds into the Fibronectin type-III 31 domain; the sequence is PPRFPIIENI…PTAPVLIPGD (94 aa). The region spanning 6261–6516 is the Protein kinase domain; that stretch reads YDIHEELGTG…IHQALEHPWL (256 aa). ATP contacts are provided by residues 6267–6275 and lysine 6290; that span reads LGTGAFGVV. Aspartate 6382 functions as the Proton acceptor in the catalytic mechanism. The segment at 6517-6581 is C-terminal regulatory domain (CDR); the sequence is TPGNAPGRDS…SIRDAFWDRS (65 aa). 5 Ig-like domains span residues 6585–6673, 6696–6795, 6863–6952, 6958–7059, and 7067–7149; these read PRFI…VFLN, PRVE…CVLT, PSFT…ATLT, PLLN…ASLV, and PPVT…KAIA.

The protein belongs to the protein kinase superfamily. CAMK Ser/Thr protein kinase family. As to quaternary structure, may interact (via protein kinase and CRD domains) with mak-1 (via protein kinase domain). Mg(2+) serves as cofactor. Phosphorylated by mak-1 on the protein kinase domain and/or CDR domain in vitro. In terms of tissue distribution, expressed in body wall, anal, vulval, and pharyngeal muscles (at protein level).

Its subcellular location is the cytoplasm. It localises to the myofibril. It is found in the sarcomere. The protein resides in the a band. It catalyses the reaction L-seryl-[protein] + ATP = O-phospho-L-seryl-[protein] + ADP + H(+). It carries out the reaction L-threonyl-[protein] + ATP = O-phospho-L-threonyl-[protein] + ADP + H(+). Its activity is regulated as follows. Forces generated by the contraction/relaxation cycles of muscle activity separate the regulatory domain from the catalytic core, activating the enzyme. At rest, the kinase domain is in a closed conformation. The active site is occupied by the autoinhibitory region (CDR), which makes extensive contact with the catalytic site, blocking substrate binding. At low forces the regulatory tail will unravel reversibly and expose the active site to its substrates, potentially stabilized by binding of Ca/CALM. At high forces the kinase begins to unfold and the integrity of the active site is disrupted. Functionally, regulator of muscle contraction and relaxation. Senses mechanical strain that occurs during muscle activity by unfolding in clearly resolvable steps at differing forces. Plays a role in the organization of sarcomeres in body wall muscles. This chain is Twitchin, found in Caenorhabditis elegans.